An 861-amino-acid chain; its full sequence is Benzylsuccinate synthase alpha subunit (861 aa).

In terms of domain architecture, PFL spans 40–712; it reads TERTRRLKAR…QAVGLYMEVG (673 aa). The disordered stretch occupies residues 718-744; sequence TPDGRFGGEAADDGGISPYSGTDKKGP. Positions 731–850 constitute a Glycine radical domain; it reads GGISPYSGTD…IIARNEQNFN (120 aa). Gly825 is subject to Glycine radical.

This sequence belongs to the glycyl radical enzyme (GRE) family. BSS subfamily. In terms of assembly, heterohexamer composed of 2 alpha subunits, 2 beta subunits and 2 gamma subunits.

The enzyme catalyses toluene + fumarate = 2-benzylsuccinate. It participates in xenobiotic degradation; toluene degradation. Activated by the benzylsuccinate synthase activating enzyme BssD. Rapidly inactivated by oxygen. Catalyzes the addition of fumarate to the methyl group of toluene, leading to the formation of benzylsuccinate. The polypeptide is Benzylsuccinate synthase alpha subunit (bssA) (Thauera aromatica).